A 284-amino-acid polypeptide reads, in one-letter code: Protein G1-like9 (284 aa).

Residues 1–69 (MEPSPDAPRA…PAAAGLSRYE (69 aa)) form a disordered region. Low complexity-rich tracts occupy residues 13–32 (AEEQPGPSSSASAPAPAASS) and 40–63 (QSQAQQQVQEAQPQPLAQQAPAAA). An ALOG domain is found at 67–194 (RYESQKRRDW…ARGIPYEKKR (128 aa)). A Nuclear localization signal motif is present at residues 192 to 196 (KKRKR). Residues 209–284 (VAPPPVVTAP…SAAKGSATSS (76 aa)) form a disordered region. Positions 246–284 (TTPAASPTTPPATSVGTTTAAATAAAAKGSAAKGSATSS) are enriched in low complexity.

It belongs to the plant homeotic and developmental regulators ALOG protein family.

It localises to the nucleus. In terms of biological role, probable transcription regulator that acts as a developmental regulator by promoting cell growth in response to light. The sequence is that of Protein G1-like9 from Oryza sativa subsp. indica (Rice).